Here is a 373-residue protein sequence, read N- to C-terminus: 4-hydroxy-3-methylbut-2-en-1-yl diphosphate synthase (flavodoxin) (373 aa).

Residues Cys-270, Cys-273, Cys-305, and Glu-312 each coordinate [4Fe-4S] cluster.

This sequence belongs to the IspG family. [4Fe-4S] cluster serves as cofactor.

The catalysed reaction is (2E)-4-hydroxy-3-methylbut-2-enyl diphosphate + oxidized [flavodoxin] + H2O + 2 H(+) = 2-C-methyl-D-erythritol 2,4-cyclic diphosphate + reduced [flavodoxin]. The protein operates within isoprenoid biosynthesis; isopentenyl diphosphate biosynthesis via DXP pathway; isopentenyl diphosphate from 1-deoxy-D-xylulose 5-phosphate: step 5/6. Its function is as follows. Converts 2C-methyl-D-erythritol 2,4-cyclodiphosphate (ME-2,4cPP) into 1-hydroxy-2-methyl-2-(E)-butenyl 4-diphosphate. The protein is 4-hydroxy-3-methylbut-2-en-1-yl diphosphate synthase (flavodoxin) of Photorhabdus laumondii subsp. laumondii (strain DSM 15139 / CIP 105565 / TT01) (Photorhabdus luminescens subsp. laumondii).